Here is a 511-residue protein sequence, read N- to C-terminus: Glucans biosynthesis protein G (511 aa).

An N-terminal signal peptide occupies residues 1–22 (MMKMRWLSAAVMLTLYTSSSWA).

It belongs to the OpgD/OpgG family.

The protein localises to the periplasm. Its pathway is glycan metabolism; osmoregulated periplasmic glucan (OPG) biosynthesis. In terms of biological role, involved in the biosynthesis of osmoregulated periplasmic glucans (OPGs). The protein is Glucans biosynthesis protein G of Escherichia coli O8 (strain IAI1).